A 401-amino-acid polypeptide reads, in one-letter code: Argininosuccinate synthase (401 aa).

Residues 11–19 (AYSGGLDTS) and alanine 38 each bind ATP. The L-citrulline site is built by tyrosine 89 and serine 94. ATP is bound at residue glycine 119. Positions 121, 125, and 126 each coordinate L-aspartate. Asparagine 125 contacts L-citrulline. 5 residues coordinate L-citrulline: arginine 129, serine 177, serine 186, glutamate 262, and tyrosine 274.

The protein belongs to the argininosuccinate synthase family. Type 1 subfamily. As to quaternary structure, homotetramer.

The protein localises to the cytoplasm. The catalysed reaction is L-citrulline + L-aspartate + ATP = 2-(N(omega)-L-arginino)succinate + AMP + diphosphate + H(+). The protein operates within amino-acid biosynthesis; L-arginine biosynthesis; L-arginine from L-ornithine and carbamoyl phosphate: step 2/3. This chain is Argininosuccinate synthase, found in Nitratidesulfovibrio vulgaris (strain DSM 19637 / Miyazaki F) (Desulfovibrio vulgaris).